The chain runs to 876 residues: Alanine--tRNA ligase (876 aa).

N6-acetyllysine is present on lysine 74. Histidine 564, histidine 568, cysteine 666, and histidine 670 together coordinate Zn(2+).

This sequence belongs to the class-II aminoacyl-tRNA synthetase family. Homotetramer. Zn(2+) is required as a cofactor.

The protein localises to the cytoplasm. It catalyses the reaction tRNA(Ala) + L-alanine + ATP = L-alanyl-tRNA(Ala) + AMP + diphosphate. Functionally, catalyzes the attachment of alanine to tRNA(Ala) in a two-step reaction: alanine is first activated by ATP to form Ala-AMP and then transferred to the acceptor end of tRNA(Ala). Also edits incorrectly charged Ser-tRNA(Ala) and Gly-tRNA(Ala) via its editing domain. This chain is Alanine--tRNA ligase, found in Escherichia coli (strain ATCC 8739 / DSM 1576 / NBRC 3972 / NCIMB 8545 / WDCM 00012 / Crooks).